A 122-amino-acid polypeptide reads, in one-letter code: Large ribosomal subunit protein bL12 (122 aa).

This sequence belongs to the bacterial ribosomal protein bL12 family. As to quaternary structure, homodimer. Part of the ribosomal stalk of the 50S ribosomal subunit. Forms a multimeric L10(L12)X complex, where L10 forms an elongated spine to which 2 to 4 L12 dimers bind in a sequential fashion. Binds GTP-bound translation factors.

Forms part of the ribosomal stalk which helps the ribosome interact with GTP-bound translation factors. Is thus essential for accurate translation. This is Large ribosomal subunit protein bL12 from Borrelia hermsii (strain HS1 / DAH).